Reading from the N-terminus, the 339-residue chain is Phosphate acyltransferase (339 aa).

The protein belongs to the PlsX family. Homodimer. Probably interacts with PlsY.

Its subcellular location is the cytoplasm. The enzyme catalyses a fatty acyl-[ACP] + phosphate = an acyl phosphate + holo-[ACP]. The protein operates within lipid metabolism; phospholipid metabolism. Its function is as follows. Catalyzes the reversible formation of acyl-phosphate (acyl-PO(4)) from acyl-[acyl-carrier-protein] (acyl-ACP). This enzyme utilizes acyl-ACP as fatty acyl donor, but not acyl-CoA. The chain is Phosphate acyltransferase from Dechloromonas aromatica (strain RCB).